The chain runs to 321 residues: Homoserine kinase (321 aa).

Belongs to the pseudomonas-type ThrB family.

The enzyme catalyses L-homoserine + ATP = O-phospho-L-homoserine + ADP + H(+). The protein operates within amino-acid biosynthesis; L-threonine biosynthesis; L-threonine from L-aspartate: step 4/5. The sequence is that of Homoserine kinase from Azorhizobium caulinodans (strain ATCC 43989 / DSM 5975 / JCM 20966 / LMG 6465 / NBRC 14845 / NCIMB 13405 / ORS 571).